Consider the following 1040-residue polypeptide: BEM1-interacting protein 2 (1040 aa).

The tract at residues Met-1–Gly-39 is disordered. Polar residues predominate over residues Pro-8–Val-17. Ser-18, Ser-24, and Ser-28 each carry phosphoserine. The region spanning Gly-43–Val-107 is the SH3 domain. Residues Trp-266–Ala-330 enclose the SAM domain. Disordered regions lie at residues Tyr-365 to Ala-412, Val-437 to Pro-478, and Ile-491 to Val-744. Residues Thr-372–Ala-397 show a composition bias toward polar residues. Residues Lys-444 to Ser-457 are compositionally biased toward pro residues. At Ser-450 the chain carries Phosphoserine. Polar residues predominate over residues Leu-459 to Pro-478. A compositionally biased stretch (low complexity) spans Ser-495–Ser-505. Phosphoserine is present on residues Ser-519, Ser-523, and Ser-546. A compositionally biased stretch (basic and acidic residues) spans Ser-557–Glu-570. Residues Gln-573 to Asn-598 are compositionally biased toward polar residues. Residues Lys-600 to Lys-609 are compositionally biased toward basic and acidic residues. The segment covering Leu-632–Ser-648 has biased composition (low complexity). Ser-652 is modified (phosphoserine). Over residues Phe-654–Pro-684 the composition is skewed to polar residues. Positions Ser-690–Val-701 are enriched in basic residues. A compositionally biased stretch (basic and acidic residues) spans Ser-702 to Lys-732. The PH domain maps to Asp-768–Ile-887. The span at Gln-943–Asp-957 shows a compositional bias: low complexity. 2 disordered regions span residues Gln-943–Thr-986 and Val-1007–Ile-1040. The segment covering Thr-973–Thr-986 has biased composition (polar residues). Over residues Gly-1015–Thr-1024 the composition is skewed to basic and acidic residues.

Interacts with BEM1. Interacts with TOS7.

The protein resides in the bud. Its subcellular location is the bud neck. Functionally, protein involved in bud formation. Functions redundantly with BOI1 to promote the fusion of secretory vesicles with the plasma membrane at sites of polarized growth. Acts as an abscission inhibitor during cytokinesis in response to chromatin bridges. The protein is BEM1-interacting protein 2 of Saccharomyces cerevisiae (strain ATCC 204508 / S288c) (Baker's yeast).